An 812-amino-acid polypeptide reads, in one-letter code: Ras guanine nucleotide exchange factor J (812 aa).

2 stretches are compositionally biased toward low complexity: residues 1–36 (MSNPVSINNSGSISNSNLNNESLSPSRLSSSPNSKS) and 53–65 (LLNRSSSGNNLNN). The disordered stretch occupies residues 1 to 146 (MSNPVSINNS…GGSSGGLNMS (146 aa)). Over residues 75–86 (SFTSNYQNIYTP) the composition is skewed to polar residues. Over residues 87–101 (NNNSYNSSNNNNNNN) the composition is skewed to low complexity. Residues 131–141 (NSGGGGGGSSG) are compositionally biased toward gly residues. Residues 214–246 (GRDTMLQLILQHLQFEGLMDSRKLLEEEARVQY) form the LisH domain. Residues 320–382 (IIYVDDKEKE…NNSIGNSNSY (63 aa)) are disordered. Over residues 323-343 (VDDKEKEKEKEKEKEKEKDKF) the composition is skewed to basic and acidic residues. Residues 344 to 382 (GPNSTNSLSGSGSSPNIPSGMNNNSSSIGNNSIGNSNSY) are compositionally biased toward low complexity. In terms of domain architecture, N-terminal Ras-GEF spans 409–535 (NKPQVKAASL…LSESLNAKIK (127 aa)). Positions 573-804 (DEEEIARQLT…YSRSMSFEPR (232 aa)) constitute a Ras-GEF domain.

Functionally, promotes the exchange of Ras-bound GDP by GTP. This is Ras guanine nucleotide exchange factor J (gefJ) from Dictyostelium discoideum (Social amoeba).